Here is a 342-residue protein sequence, read N- to C-terminus: Ferredoxin--NADP reductase (342 aa).

Residues C17, D36, Q44, Y49, I89, F124, D289, and T330 each coordinate FAD.

Belongs to the ferredoxin--NADP reductase type 2 family. Homodimer. The cofactor is FAD.

The enzyme catalyses 2 reduced [2Fe-2S]-[ferredoxin] + NADP(+) + H(+) = 2 oxidized [2Fe-2S]-[ferredoxin] + NADPH. The polypeptide is Ferredoxin--NADP reductase (Rhodopseudomonas palustris (strain BisA53)).